We begin with the raw amino-acid sequence, 249 residues long: Serine acetyltransferase (249 aa).

This sequence belongs to the transferase hexapeptide repeat family.

Its subcellular location is the cytoplasm. The catalysed reaction is L-serine + acetyl-CoA = O-acetyl-L-serine + CoA. It functions in the pathway amino-acid biosynthesis; L-cysteine biosynthesis; L-cysteine from L-serine: step 1/2. The sequence is that of Serine acetyltransferase (cysE) from Synechocystis sp. (strain ATCC 27184 / PCC 6803 / Kazusa).